A 265-amino-acid polypeptide reads, in one-letter code: 6-carboxyhexanoate--CoA ligase (265 aa).

This sequence belongs to the BioW family. As to quaternary structure, homodimer. Mg(2+) is required as a cofactor.

The catalysed reaction is heptanedioate + ATP + CoA = 6-carboxyhexanoyl-CoA + AMP + diphosphate. The protein operates within metabolic intermediate metabolism; pimeloyl-CoA biosynthesis; pimeloyl-CoA from pimelate: step 1/1. Catalyzes the transformation of pimelate into pimeloyl-CoA with concomitant hydrolysis of ATP to AMP. This is 6-carboxyhexanoate--CoA ligase from Syntrophotalea carbinolica (strain DSM 2380 / NBRC 103641 / GraBd1) (Pelobacter carbinolicus).